The chain runs to 597 residues: Elongation factor 4 (597 aa).

The region spanning 2–184 (DHIRNFSIIA…ALVAKVPPPK (183 aa)) is the tr-type G domain. Residues 14–19 (DHGKST) and 131–134 (NKID) contribute to the GTP site.

Belongs to the TRAFAC class translation factor GTPase superfamily. Classic translation factor GTPase family. LepA subfamily.

Its subcellular location is the cell inner membrane. It carries out the reaction GTP + H2O = GDP + phosphate + H(+). Required for accurate and efficient protein synthesis under certain stress conditions. May act as a fidelity factor of the translation reaction, by catalyzing a one-codon backward translocation of tRNAs on improperly translocated ribosomes. Back-translocation proceeds from a post-translocation (POST) complex to a pre-translocation (PRE) complex, thus giving elongation factor G a second chance to translocate the tRNAs correctly. Binds to ribosomes in a GTP-dependent manner. This chain is Elongation factor 4, found in Paraburkholderia xenovorans (strain LB400).